The chain runs to 377 residues: MNPVRQPYDLAAPAPNGMRRGRTTGSCATAAVKAALMLLLDGVDADEVFISLPDPDFYLAVPVESVAWLDENTVRAEVLKYAGDDPDNTDGATIFAEVKLNSSGALRFLAAPGVGMVTQPGLRIPPGEPAINPVPRQMMRMAVDEVLAGRPDPGIDLAIGCVDGDKIAKRTFNPMLGIVGGISILGTSGIVEPMSQAAWIASIEVYVRVALGELPPAIAFTPGKIGRGYAADTLGLEKKQVVQIANFVGDSLDFAESVLIEQGRILDTLWVLGHPGKIAKLLDGVWDTHSGKSGMAMDAVAGVAADLGYPSELVAQIKQANTVENVVQIMNSQPDTRGYWMEIERRTAARMATKVPSVRQVAVRLFSMDGTPLGEAA.

Positions 1 to 21 are disordered; sequence MNPVRQPYDLAAPAPNGMRRG.

This sequence belongs to the CbiD family.

It carries out the reaction Co-precorrin-5B + S-adenosyl-L-methionine = Co-precorrin-6A + S-adenosyl-L-homocysteine. Its pathway is cofactor biosynthesis; adenosylcobalamin biosynthesis; cob(II)yrinate a,c-diamide from sirohydrochlorin (anaerobic route): step 6/10. Catalyzes the methylation of C-1 in cobalt-precorrin-5B to form cobalt-precorrin-6A. The polypeptide is Cobalt-precorrin-5B C(1)-methyltransferase (Chromobacterium violaceum (strain ATCC 12472 / DSM 30191 / JCM 1249 / CCUG 213 / NBRC 12614 / NCIMB 9131 / NCTC 9757 / MK)).